The primary structure comprises 175 residues: FRTEGAEKLQKAFEIAKRIPIITSAKTLELAKVTQFKTMEFARYIEELARSVPLPPLILNCRAFVEEMFEAVQVDDPDEMGERIKERPALNAQDGIFVINPEMGRSNSPGGDSDDGSLSEQGQEIAVQVSVHPQSETKSIDTDSQDSSHFSPPDDTGSTESNSNYKDGSFESCQL.

The Cytoplasmic segment spans residues 1–175; the sequence is FRTEGAEKLQ…KDGSFESCQL (175 aa). Residues 85 to 175 are disordered; that stretch reads KERPALNAQD…KDGSFESCQL (91 aa). The span at 145 to 175 shows a compositional bias: polar residues; it reads QDSSHFSPPDDTGSTESNSNYKDGSFESCQL.

In terms of processing, glycosylated.

Its subcellular location is the cell membrane. Functionally, component of the elastin-associated microfibrils. This is Microfibril-associated glycoprotein 3 (MFAP3) from Bos taurus (Bovine).